Here is a 24-residue protein sequence, read N- to C-terminus: Pyruvate kinase (24 aa).

It belongs to the pyruvate kinase family. Homotetramer. It depends on Mg(2+) as a cofactor. K(+) is required as a cofactor.

The catalysed reaction is pyruvate + ATP = phosphoenolpyruvate + ADP + H(+). It functions in the pathway carbohydrate degradation; glycolysis; pyruvate from D-glyceraldehyde 3-phosphate: step 5/5. This Clostridium pasteurianum protein is Pyruvate kinase (pyk).